Reading from the N-terminus, the 297-residue chain is Large ribosomal subunit protein uL18 (297 aa).

N-acetylglycine is present on Gly2. Residues Lys5 and Lys48 each carry the N6-acetyllysine modification. The residue at position 185 (Ser185) is a Phosphoserine. Lys220 is subject to N6-acetyllysine; alternate. A Glycyl lysine isopeptide (Lys-Gly) (interchain with G-Cter in SUMO1); alternate cross-link involves residue Lys220. Residue Lys220 forms a Glycyl lysine isopeptide (Lys-Gly) (interchain with G-Cter in SUMO2); alternate linkage. Thr232 bears the Phosphothreonine mark. Positions 252–297 (VYEKKPKKEVKKKRWNRPKMSLAQKKDRVAQKKASFLRAQERAAES) are disordered. The span at 258 to 268 (KKEVKKKRWNR) shows a compositional bias: basic residues. Ser272 bears the Phosphoserine mark.

It belongs to the universal ribosomal protein uL18 family. As to quaternary structure, component of the large ribosomal subunit (LSU). Part of the 5S RNP complex, which is a LSU subcomplex composed of the 5S RNA, RPL5 and RPL11. Component of a hexameric 5S RNP precursor complex, composed of 5S RNA, RRS1, RPF2/BXDC1, RPL5, RPL11 and HEATR3; this complex acts as a precursor for ribosome assembly. Interacts with NVL in an ATP-dependent manner. Interacts with RRP1B. Interacts with IPO5, IPO7 and KPNB1; these interactions may be involved in RPL5 nuclear import for the assembly of ribosomal subunits.

It localises to the cytoplasm. The protein localises to the nucleus. The protein resides in the nucleolus. In terms of biological role, component of the ribosome, a large ribonucleoprotein complex responsible for the synthesis of proteins in the cell. The small ribosomal subunit (SSU) binds messenger RNAs (mRNAs) and translates the encoded message by selecting cognate aminoacyl-transfer RNA (tRNA) molecules. The large subunit (LSU) contains the ribosomal catalytic site termed the peptidyl transferase center (PTC), which catalyzes the formation of peptide bonds, thereby polymerizing the amino acids delivered by tRNAs into a polypeptide chain. The nascent polypeptides leave the ribosome through a tunnel in the LSU and interact with protein factors that function in enzymatic processing, targeting, and the membrane insertion of nascent chains at the exit of the ribosomal tunnel. As part of the 5S RNP/5S ribonucleoprotein particle it is an essential component of the LSU, required for its formation and the maturation of rRNAs. It also couples ribosome biogenesis to p53/TP53 activation. As part of the 5S RNP it accumulates in the nucleoplasm and inhibits MDM2, when ribosome biogenesis is perturbed, mediating the stabilization and the activation of TP53. This chain is Large ribosomal subunit protein uL18 (RPL5), found in Bos taurus (Bovine).